Consider the following 313-residue polypeptide: Acetaldehyde dehydrogenase 1 (313 aa).

16 to 19 (SGNI) is an NAD(+) binding site. Residue cysteine 131 is the Acyl-thioester intermediate of the active site. Residues 162–170 (SAGPGTRAN) and asparagine 281 each bind NAD(+).

The protein belongs to the acetaldehyde dehydrogenase family.

It carries out the reaction acetaldehyde + NAD(+) + CoA = acetyl-CoA + NADH + H(+). The polypeptide is Acetaldehyde dehydrogenase 1 (Mycobacterium sp. (strain JLS)).